Consider the following 98-residue polypeptide: U-scoloptoxin(16)-Er9a (98 aa).

The N-terminal stretch at M1–G24 is a signal peptide.

The protein belongs to the scoloptoxin-16 family. In terms of processing, contains 4 disulfide bonds. In terms of tissue distribution, expressed by the venom gland.

The protein resides in the secreted. The protein is U-scoloptoxin(16)-Er9a of Ethmostigmus rubripes (Giant centipede).